The sequence spans 258 residues: Imidazole glycerol phosphate synthase subunit HisF (258 aa).

Catalysis depends on residues aspartate 11 and aspartate 130.

The protein belongs to the HisA/HisF family. Heterodimer of HisH and HisF.

It localises to the cytoplasm. It catalyses the reaction 5-[(5-phospho-1-deoxy-D-ribulos-1-ylimino)methylamino]-1-(5-phospho-beta-D-ribosyl)imidazole-4-carboxamide + L-glutamine = D-erythro-1-(imidazol-4-yl)glycerol 3-phosphate + 5-amino-1-(5-phospho-beta-D-ribosyl)imidazole-4-carboxamide + L-glutamate + H(+). It participates in amino-acid biosynthesis; L-histidine biosynthesis; L-histidine from 5-phospho-alpha-D-ribose 1-diphosphate: step 5/9. IGPS catalyzes the conversion of PRFAR and glutamine to IGP, AICAR and glutamate. The HisF subunit catalyzes the cyclization activity that produces IGP and AICAR from PRFAR using the ammonia provided by the HisH subunit. This Citrobacter koseri (strain ATCC BAA-895 / CDC 4225-83 / SGSC4696) protein is Imidazole glycerol phosphate synthase subunit HisF.